Here is an 868-residue protein sequence, read N- to C-terminus: Hopanoid transporter HpnN (868 aa).

12 consecutive transmembrane segments (helical) span residues 16 to 36, 273 to 293, 298 to 318, 326 to 346, 370 to 390, 403 to 423, 452 to 472, 710 to 730, 740 to 760, 762 to 782, 805 to 825, and 834 to 854; these read FAAF…FYTY, GAVV…WMAL, IIFA…AVGL, LLSI…GIQF, YSAV…LSFL, IAGA…PALL, IAII…LYFM, IVAS…ILLW, ALTL…CVLI, LPLN…GVAF, AIFF…LSSH, and LLAL…PALM. One can recognise an SSD domain in the interval 299 to 425; it reads IFAVAANLVI…ITVLPALLKL (127 aa).

It belongs to the resistance-nodulation-cell division (RND) (TC 2.A.6) family. MmpL subfamily.

The protein localises to the cell inner membrane. Functionally, essential for hopanoid transport from the cytoplasmic to the outer membrane. Required for the C(35) hopanoid, bacteriohopanetetrol, to remain localized to the mother cell type. This chain is Hopanoid transporter HpnN, found in Rhodopseudomonas palustris (strain TIE-1).